We begin with the raw amino-acid sequence, 97 residues long: Co-chaperonin GroES (97 aa).

This sequence belongs to the GroES chaperonin family. In terms of assembly, heptamer of 7 subunits arranged in a ring. Interacts with the chaperonin GroEL.

Its subcellular location is the cytoplasm. Functionally, together with the chaperonin GroEL, plays an essential role in assisting protein folding. The GroEL-GroES system forms a nano-cage that allows encapsulation of the non-native substrate proteins and provides a physical environment optimized to promote and accelerate protein folding. GroES binds to the apical surface of the GroEL ring, thereby capping the opening of the GroEL channel. The sequence is that of Co-chaperonin GroES from Baumannia cicadellinicola subsp. Homalodisca coagulata.